The chain runs to 658 residues: MEFVGIDIGNYKTVIASSKENGKVYGDEQGKRSIRTVMELSTPVRRFGNGVTNDVEQSLDLRSRSFRDALEDKKGWGNLAMFMKYIDRVVKKNTPTHPPICMAVPAYFKERERRILVDIANTMDFKLEGLITDISAIAMFACVRRENMPSEFLLFDFGFSKTTAGLFSFEKNVLKPLYMKTVRVGSMQFDEKLIDIIVEKHSLEKSRLVREKIKRNLDKIKTTLNSTKCCNIQLFITENPLEVIITQEEYRNAVKSYLSDLDSFVSSVIKETEFNGLVEVVGGNSISFLIKEMLRDKVEYQVTLDVSDSTAIGAALGMACMSLRTRYSLHDIVGREISIRIQGEDVSPTVIFKSTELVEGNPKIVTYNRKESFVLEILEDGEVISTLNVVKGETKETKAIHVSFSIGKFGTVCVNSVECEESVDYEYKPFRISDIDLDDIKALEMKYRDGELGLERIGTMRNELETMAVGLGDALYNKFGKITNDEELNTVREVAMDLFDMPQSETVGQEEEVRNTILSKLEFISKKLSDYRDAAVEDLKKHKDMINEFRKEYGSVFTPSFYKLQGLLYKVDEYLKDFDLNLFNVKLFDESFIMEIKGDIQKYLEKAKLEIEEKRKEEERKSKKENAQEGTSSKPESKEESEAKEDNDEESDVASIDE.

Residues 614–627 are compositionally biased toward basic and acidic residues; sequence KRKEEERKSKKENA. Residues 614–658 form a disordered region; sequence KRKEEERKSKKENAQEGTSSKPESKEESEAKEDNDEESDVASIDE. Over residues 642–658 the composition is skewed to acidic residues; it reads EAKEDNDEESDVASIDE.

This sequence belongs to the heat shock protein 70 family.

It is found in the cytoplasm. Required for normal growth at various temperatures. The polypeptide is Heat shock protein homolog SSE1 (SSE1) (Encephalitozoon cuniculi (strain GB-M1) (Microsporidian parasite)).